A 183-amino-acid polypeptide reads, in one-letter code: UPF0200 protein MmarC6_1392 (183 aa).

An ATP-binding site is contributed by 8-15 (GMPGSGKS).

It belongs to the UPF0200 family.

The sequence is that of UPF0200 protein MmarC6_1392 from Methanococcus maripaludis (strain C6 / ATCC BAA-1332).